The chain runs to 240 residues: Probable ATP synthase 24 kDa subunit, mitochondrial (240 aa).

The N-terminal 32 residues, 1–32 (MAYASRFLSRSKQLQGGLVILQQQHAIPVRAF), are a transit peptide targeting the mitochondrion. Composition is skewed to basic and acidic residues over residues 210 to 222 (AVEAMESQKKKEE) and 229 to 240 (PDVKSLDIRNFI). The interval 210–240 (AVEAMESQKKKEEFQDEEMPDVKSLDIRNFI) is disordered.

The protein localises to the mitochondrion. It is found in the mitochondrion inner membrane. Functionally, mitochondrial membrane ATP synthase (F(1)F(0) ATP synthase or Complex V) produces ATP from ADP in the presence of a proton gradient across the membrane which is generated by electron transport complexes of the respiratory chain. F-type ATPases consist of two structural domains, F(1) - containing the extramembraneous catalytic core and F(0) - containing the membrane proton channel, linked together by a central stalk and a peripheral stalk. During catalysis, ATP synthesis in the catalytic domain of F(1) is coupled via a rotary mechanism of the central stalk subunits to proton translocation. Part of the complex F(0) domain. The chain is Probable ATP synthase 24 kDa subunit, mitochondrial from Arabidopsis thaliana (Mouse-ear cress).